A 238-amino-acid chain; its full sequence is Ribonuclease PH (238 aa).

Phosphate is bound by residues Arg86 and Gly124 to Arg126.

Belongs to the RNase PH family. In terms of assembly, homohexameric ring arranged as a trimer of dimers.

It carries out the reaction tRNA(n+1) + phosphate = tRNA(n) + a ribonucleoside 5'-diphosphate. Functionally, phosphorolytic 3'-5' exoribonuclease that plays an important role in tRNA 3'-end maturation. Removes nucleotide residues following the 3'-CCA terminus of tRNAs; can also add nucleotides to the ends of RNA molecules by using nucleoside diphosphates as substrates, but this may not be physiologically important. Probably plays a role in initiation of 16S rRNA degradation (leading to ribosome degradation) during starvation. This is Ribonuclease PH from Escherichia coli O6:K15:H31 (strain 536 / UPEC).